Reading from the N-terminus, the 58-residue chain is UPF0339 protein MA_3316 (58 aa).

Belongs to the UPF0339 family.

This chain is UPF0339 protein MA_3316, found in Methanosarcina acetivorans (strain ATCC 35395 / DSM 2834 / JCM 12185 / C2A).